Here is a 688-residue protein sequence, read N- to C-terminus: DNA ligase (688 aa).

NAD(+) is bound by residues 38–42 (DEEYD), 87–88 (SL), and Glu118. Lys120 acts as the N6-AMP-lysine intermediate in catalysis. NAD(+) is bound by residues Arg141, Glu175, Lys291, and Lys315. 4 residues coordinate Zn(2+): Cys409, Cys412, Cys428, and Cys433. The BRCT domain occupies 590–679 (VKLDILRGLT…AELKGYNFDE (90 aa)).

The protein belongs to the NAD-dependent DNA ligase family. LigA subfamily. Requires Mg(2+) as cofactor. Mn(2+) is required as a cofactor.

The catalysed reaction is NAD(+) + (deoxyribonucleotide)n-3'-hydroxyl + 5'-phospho-(deoxyribonucleotide)m = (deoxyribonucleotide)n+m + AMP + beta-nicotinamide D-nucleotide.. Its function is as follows. DNA ligase that catalyzes the formation of phosphodiester linkages between 5'-phosphoryl and 3'-hydroxyl groups in double-stranded DNA using NAD as a coenzyme and as the energy source for the reaction. It is essential for DNA replication and repair of damaged DNA. In Thermotoga maritima (strain ATCC 43589 / DSM 3109 / JCM 10099 / NBRC 100826 / MSB8), this protein is DNA ligase.